The following is a 232-amino-acid chain: Protein Mis18-alpha (232 aa).

Serine 36, serine 39, and serine 40 each carry phosphoserine. In terms of domain architecture, Mis18 spans 79 to 177; sequence PLVFLCSGCR…SVEAIESYIL (99 aa). Residues cysteine 84, cysteine 87, cysteine 140, and cysteine 143 each contribute to the Zn(2+) site. A Glycyl lysine isopeptide (Lys-Gly) (interchain with G-Cter in SUMO2) cross-link involves residue lysine 161. At serine 232 the chain carries Phosphoserine.

It belongs to the mis18 family. In terms of assembly, homodimer, and heterodimer with OIP5/MIS18B. Identified in a complex containing MIS18A, OIP5/MIS18B, MIS18BP1, RBBP7 and RBBP4.

Its subcellular location is the nucleus. The protein resides in the chromosome. It is found in the centromere. Functionally, required for recruitment of CENPA to centromeres and normal chromosome segregation during mitosis. In Otolemur garnettii (Small-eared galago), this protein is Protein Mis18-alpha (MIS18A).